The chain runs to 315 residues: Phosphatidylglycerol--prolipoprotein diacylglyceryl transferase (315 aa).

A run of 2 helical transmembrane segments spans residues 19 to 39 (FTIH…VWIL) and 93 to 113 (VWEG…VAFL). Arginine 141 contributes to the a 1,2-diacyl-sn-glycero-3-phospho-(1'-sn-glycerol) binding site. The next 2 helical transmembrane spans lie at 188-208 (LFHP…ALII) and 256-276 (VWTA…LYQY).

The protein belongs to the Lgt family.

The protein localises to the cell membrane. The catalysed reaction is L-cysteinyl-[prolipoprotein] + a 1,2-diacyl-sn-glycero-3-phospho-(1'-sn-glycerol) = an S-1,2-diacyl-sn-glyceryl-L-cysteinyl-[prolipoprotein] + sn-glycerol 1-phosphate + H(+). Its pathway is protein modification; lipoprotein biosynthesis (diacylglyceryl transfer). Functionally, catalyzes the transfer of the diacylglyceryl group from phosphatidylglycerol to the sulfhydryl group of the N-terminal cysteine of a prolipoprotein, the first step in the formation of mature lipoproteins. The protein is Phosphatidylglycerol--prolipoprotein diacylglyceryl transferase of Bifidobacterium longum (strain NCC 2705).